The following is a 61-amino-acid chain: Small ribosomal subunit protein bS21 (61 aa).

This sequence belongs to the bacterial ribosomal protein bS21 family.

In Methylacidiphilum infernorum (isolate V4) (Methylokorus infernorum (strain V4)), this protein is Small ribosomal subunit protein bS21.